A 465-amino-acid chain; its full sequence is Ribosomal oxygenase 2 (465 aa).

In terms of domain architecture, JmjC spans 139–271 (QPQRFKDELW…NSWGDFLLDT (133 aa)). Fe cation contacts are provided by His-179, Asp-181, and His-240. Ser-309 carries the post-translational modification Phosphoserine.

The protein belongs to the ROX family. MINA53 subfamily. Fe(2+) serves as cofactor. Expressed in liver, skeletal muscle, heart, pancreas, and placenta. Not detected in brain, lung or kidney. Expressed in several lung cancer tissues, but is barely detected in the adjacent non-cancerous tissues. Also highly expressed in several esophageal squamous cell carcinoma (ESCC), and colon cancer tissues, and in various cancer cell lines.

The protein localises to the nucleus. Its subcellular location is the nucleolus. It catalyses the reaction L-histidyl-[protein] + 2-oxoglutarate + O2 = (3S)-3-hydroxy-L-histidyl-[protein] + succinate + CO2. The enzyme catalyses L-histidyl-[ribosomal protein uL15] + 2-oxoglutarate + O2 = (3S)-3-hydroxy-L-histidyl-[ribosomal protein uL15] + succinate + CO2. Oxygenase that can act as both a histone lysine demethylase and a ribosomal histidine hydroxylase. Is involved in the demethylation of trimethylated 'Lys-9' on histone H3 (H3K9me3), leading to an increase in ribosomal RNA expression. Also catalyzes the hydroxylation of 60S ribosomal protein L27a on 'His-39'. May play an important role in cell growth and survival. May be involved in ribosome biogenesis, most likely during the assembly process of pre-ribosomal particles. The chain is Ribosomal oxygenase 2 from Homo sapiens (Human).